Here is a 282-residue protein sequence, read N- to C-terminus: Ribosome biogenesis GTPase A (282 aa).

One can recognise a CP-type G domain in the interval 14-178; sequence RREVTEKLKL…LLDTPGILWP (165 aa). GTP-binding positions include 58 to 61, 86 to 87, 130 to 135, and glycine 174; these read NKAD, NS, and NVGKST.

Belongs to the TRAFAC class YlqF/YawG GTPase family. MTG1 subfamily. Interacts with ctc. Interacts with the immature 50S ribosome subunit. 2 molecules of rbgA bind to one 50S subunit.

The protein localises to the cytoplasm. Functionally, essential protein that is required for a late step of 50S ribosomal subunit assembly. Has GTPase activity that is stimulated by interaction with the immature 50S ribosome subunit. Binds to the 23S rRNA. Required for the association of ribosomal proteins rplP and rpmA with the large subunit. In Bacillus spizizenii (strain ATCC 23059 / NRRL B-14472 / W23) (Bacillus subtilis subsp. spizizenii), this protein is Ribosome biogenesis GTPase A (rbgA).